The sequence spans 220 residues: PKHD-type hydroxylase sync_1544 (220 aa).

The 95-residue stretch at 79-173 folds into the Fe2OG dioxygenase domain; that stretch reads KLHRFLISKT…RTVCVGWIES (95 aa). Fe cation is bound by residues His97, Asp99, and His154. Arg164 lines the 2-oxoglutarate pocket.

Fe(2+) serves as cofactor. L-ascorbate is required as a cofactor.

The sequence is that of PKHD-type hydroxylase sync_1544 from Synechococcus sp. (strain CC9311).